The following is a 184-amino-acid chain: Photosystem I assembly protein Ycf4 (184 aa).

2 consecutive transmembrane segments (helical) span residues 19–39 (LSNFCWALILFLGSLGFLLVG) and 57–77 (FIFFPQGIVMSFYGIAGLFIS).

The protein belongs to the Ycf4 family.

It localises to the plastid. Its subcellular location is the chloroplast thylakoid membrane. In terms of biological role, seems to be required for the assembly of the photosystem I complex. This is Photosystem I assembly protein Ycf4 from Jasminum nudiflorum (Winter jasmine).